The following is a 1503-amino-acid chain: DNA-directed RNA polymerase subunit beta' (1503 aa).

Residues C60, C62, C75, and C78 each coordinate Zn(2+). 3 residues coordinate Mg(2+): D626, D628, and D630. Zn(2+) contacts are provided by C1002, C1075, C1082, and C1085. A disordered region spans residues 1439–1503 (EESQQAEEAP…EEEDNDLPAF (65 aa)). Positions 1486 to 1503 (GDNDQSDAEEEDNDLPAF) are enriched in acidic residues.

The protein belongs to the RNA polymerase beta' chain family. The RNAP catalytic core consists of 2 alpha, 1 beta, 1 beta' and 1 omega subunit. When a sigma factor is associated with the core the holoenzyme is formed, which can initiate transcription. Mg(2+) is required as a cofactor. Requires Zn(2+) as cofactor.

It catalyses the reaction RNA(n) + a ribonucleoside 5'-triphosphate = RNA(n+1) + diphosphate. In terms of biological role, DNA-dependent RNA polymerase catalyzes the transcription of DNA into RNA using the four ribonucleoside triphosphates as substrates. The sequence is that of DNA-directed RNA polymerase subunit beta' from Chloroflexus aurantiacus (strain ATCC 29364 / DSM 637 / Y-400-fl).